We begin with the raw amino-acid sequence, 344 residues long: Putative F-box/kelch-repeat protein At1g19930 (344 aa).

In terms of domain architecture, F-box spans 8 to 54; the sequence is TELIFSLPNDLLVNILARVSRLDYPILSLVSKRFSSVLTLPELYQTR. 4 Kelch repeats span residues 122 to 168, 170 to 195, 196 to 241, and 243 to 276; these read NIYN…LLDG, IYVTGGCRLTFHGCGDQTDNVVVDGK, LHSC…YYYY, and NENIKWYDTKVRSWRTLNGLKTLPRFARYANVRL.

The chain is Putative F-box/kelch-repeat protein At1g19930 from Arabidopsis thaliana (Mouse-ear cress).